Reading from the N-terminus, the 98-residue chain is Small ribosomal subunit protein uS19 (98 aa).

The tract at residues 77-98 (TRTFRGHAGGKAEKGGSAPKKK) is disordered.

It belongs to the universal ribosomal protein uS19 family.

Protein S19 forms a complex with S13 that binds strongly to the 16S ribosomal RNA. The sequence is that of Small ribosomal subunit protein uS19 from Chlorobium phaeobacteroides (strain DSM 266 / SMG 266 / 2430).